The sequence spans 444 residues: Tubulin beta-8 chain (444 aa).

An MREI motif motif is present at residues 1–4 (MREI). Residues Gln11, Glu69, Ser138, Gly142, Thr143, and Gly144 each coordinate GTP. Glu69 serves as a coordination point for Mg(2+). Position 172 is a phosphoserine; by CDK1 (Ser172). Residues Asn204 and Asn226 each coordinate GTP. Position 436 is a 5-glutamyl polyglutamate (Glu436).

It belongs to the tubulin family. As to quaternary structure, dimer of alpha and beta chains. A typical microtubule is a hollow water-filled tube with an outer diameter of 25 nm and an inner diameter of 15 nM. Alpha-beta heterodimers associate head-to-tail to form protofilaments running lengthwise along the microtubule wall with the beta-tubulin subunit facing the microtubule plus end conferring a structural polarity. Microtubules usually have 13 protofilaments but different protofilament numbers can be found in some organisms and specialized cells. Mg(2+) is required as a cofactor. In terms of processing, some glutamate residues at the C-terminus are polyglycylated, resulting in polyglycine chains on the gamma-carboxyl group. Glycylation is mainly limited to tubulin incorporated into axonemes (cilia and flagella) whereas glutamylation is prevalent in neuronal cells, centrioles, axonemes, and the mitotic spindle. Both modifications can coexist on the same protein on adjacent residues, and lowering polyglycylation levels increases polyglutamylation, and reciprocally. Cilia and flagella glycylation is required for their stability and maintenance. Flagella glycylation controls sperm motility. Post-translationally, some glutamate residues at the C-terminus are polyglutamylated, resulting in polyglutamate chains on the gamma-carboxyl group. Polyglutamylation plays a key role in microtubule severing by spastin (SPAST). SPAST preferentially recognizes and acts on microtubules decorated with short polyglutamate tails: severing activity by SPAST increases as the number of glutamates per tubulin rises from one to eight, but decreases beyond this glutamylation threshold. Glutamylation is also involved in cilia motility. Phosphorylated on Ser-172 by CDK1 during the cell cycle, from metaphase to telophase, but not in interphase. This phosphorylation inhibits tubulin incorporation into microtubules.

It is found in the cytoplasm. The protein resides in the cytoskeleton. It localises to the spindle. In terms of biological role, tubulin is the major constituent of microtubules, a cylinder consisting of laterally associated linear protofilaments composed of alpha- and beta-tubulin heterodimers. Microtubules grow by the addition of GTP-tubulin dimers to the microtubule end, where a stabilizing cap forms. Below the cap, tubulin dimers are in GDP-bound state, owing to GTPase activity of alpha-tubulin. Has a key role in meiotic spindle assembly and oocyte maturation. This chain is Tubulin beta-8 chain (TUBB8), found in Papio hamadryas (Hamadryas baboon).